The chain runs to 235 residues: Small ribosomal subunit protein uS2c (235 aa).

This sequence belongs to the universal ribosomal protein uS2 family.

It localises to the plastid. Its subcellular location is the chloroplast. This is Small ribosomal subunit protein uS2c (rps2) from Marchantia polymorpha (Common liverwort).